Consider the following 384-residue polypeptide: Polyketide synthase BAS (384 aa).

The active-site Nucleophile and monoketide coumarate intermediate is the Cys157. Cys157 carries the S-(4-hydroxycinnamyl)cysteine modification.

It belongs to the thiolase-like superfamily. Chalcone/stilbene synthases family. As to quaternary structure, homodimer.

It carries out the reaction 4-coumaroyl-CoA + malonyl-CoA + H2O + H(+) = 4-hydroxybenzalacetone + 2 CO2 + 2 CoA. The protein operates within secondary metabolite biosynthesis; flavonoid biosynthesis. Functionally, polyketide synthase producing 4-hydroxybenzalacetone. Can use p-coumaryl-CoA as substrate but does not accept hexanoyl-CoA, isobutyryl-CoA, isovaleryl-CoA, and acetyl-CoA as a substrates. Catalyzes the initial key reaction step in the biosynthesis of phenylbutanoids. The polypeptide is Polyketide synthase BAS (BAS) (Rheum palmatum (Chinese rhubarb)).